The sequence spans 699 residues: MPAFFCLPMACQRQVDSIDRSQSNLQAIPSDIFRFRKLEDLNLTMNNIKELDHRLFSLRHLRILDVSDNELAVLPAEIGNLTQLIELNLNRNSIAKLPDTMQNCKLLTTLNLSSNPFTRLPETICECSSITILSLNETSLTLLPSNIGSLTNLRVLEARDNLLRTIPLSIVELRKLEELDLGQNELEALPAEIGKLTSLREFYVDINSLTSLPDSISGCRMLDQLDVSENQIIRLPENLGRMPNLTDLNISINEIIELPSSFGELKRLQMLKADRNSLHNLTSEIGKCQSLTELYLGQNFLTDLPDTIGDLRQLTTLNVDCNNLSDIPDTIGNCKSLTVLSLRQNILTELPMTIGKCENLTVLDVASNKLPHLPFTVKVLYKLQALWLSENQTQSILKLSETRDDRKGIKVVTCYLLPQVDAIDGEGRSGSAQHNTDRGAFLGGPKVHFHDQADTTFEENKEAEIHLGNFERHNTPHPKTPKHKKGSIDGHMLPHEIDQPRQLSLVSNHRTSTSSFGESSNSINRDLADIRAQNGVREATLSPEREERMATSLSSLSNLAAGTQNMHTIRIQKDDTGKLGLSFAGGTSNDPAPNSNGDSGLFVTKVTPGSAAYRCGLREGDKLIRANDVNMINASQDNAMEAIKKRETVELVVLRRSPSPVSRTSEPSLNGSSHQLNHFDAGSPDSTMFVTSSTPVYAS.

LRR repeat units follow at residues 37–59 (KLED…FSLR), 60–81 (HLRI…IGNL), 83–104 (QLIE…MQNC), 106–127 (LLTT…ICEC), 129–150 (SITI…IGSL), 152–174 (NLRV…VELR), 175–196 (KLEE…IGKL), 198–219 (SLRE…ISGC), 221–242 (MLDQ…LGRM), 244–265 (NLTD…FGEL), 267–288 (RLQM…IGKC), 290–311 (SLTE…IGDL), 313–334 (QLTT…IGNC), 336–357 (SLTV…IGKC), 359–380 (NLTV…VKVL), and 382–403 (KLQA…SETR). One can recognise a PDZ domain in the interval 584 to 665 (AGGTSNDPAP…RSPSPVSRTS (82 aa)). The tract at residues 656–699 (RSPSPVSRTSEPSLNGSSHQLNHFDAGSPDSTMFVTSSTPVYAS) is disordered. Polar residues-rich tracts occupy residues 659–676 (SPVS…SHQL) and 684–699 (PDST…VYAS).

Belongs to the LAP (LRR and PDZ) protein family. In terms of tissue distribution, expressed in the terminal web of the intestine. Expressed in seam cells. Expressed in the basolateral surfaces of epithelia and the nervous system. Expressed in the intestine, epidermis, excretory canal, reproductive system including vulva, uterus and spermatheca, in both larval and adult stage animals.

The protein resides in the basolateral cell membrane. Its function is as follows. Critical role in assembling adherens junctions; adapter protein involved in polarizing protein trafficking in epithelial cells. Necessary to maintain, not establish, the entire terminal web (organelle-depleted, intermediate filament-rich layer of cytoplasm that underlies the apical microvilli of polarized epithelial cells) or brush border assembly at the apical surface gut cells. Required for correct localization of ifb-2 intermediate filaments in the terminal web. Required for dlg-1 and hmr-1 lateral localization. Maintains cell polarity by correctly positioning adherens junction protein components including ajm-1 and hmp-1 at discrete subapical positions. Plays a role in the correct localization of the dlg-1-ajm-1 complex, polarity protein par-3, and actin microfilament to the apical junction of spermatheca cells, and is required for ovulation. Regulates the establishment of newly-formed epithelia in conjunction with dlg-1. Required in the epidermis during larval development. Plays a role in cellular junction integrity and in the directed outgrowth of seam cells, towards neighboring seam cells, during larval development; probably acts by promoting the assembly and stability of dlg-1 at apical junctions. This is Protein Scribble homolog let-413 from Caenorhabditis elegans.